Here is a 274-residue protein sequence, read N- to C-terminus: Dermonecrotic toxin LspiSicTox-betaIII2 (274 aa).

H5 is an active-site residue. Mg(2+) contacts are provided by E25 and D27. Residue H41 is the Nucleophile of the active site. 2 disulfides stabilise this stretch: C45-C51 and C47-C189. D85 lines the Mg(2+) pocket.

This sequence belongs to the arthropod phospholipase D family. Class II subfamily. It depends on Mg(2+) as a cofactor. In terms of tissue distribution, expressed by the venom gland.

It localises to the secreted. It carries out the reaction an N-(acyl)-sphingosylphosphocholine = an N-(acyl)-sphingosyl-1,3-cyclic phosphate + choline. The enzyme catalyses an N-(acyl)-sphingosylphosphoethanolamine = an N-(acyl)-sphingosyl-1,3-cyclic phosphate + ethanolamine. The catalysed reaction is a 1-acyl-sn-glycero-3-phosphocholine = a 1-acyl-sn-glycero-2,3-cyclic phosphate + choline. It catalyses the reaction a 1-acyl-sn-glycero-3-phosphoethanolamine = a 1-acyl-sn-glycero-2,3-cyclic phosphate + ethanolamine. Its function is as follows. Dermonecrotic toxins cleave the phosphodiester linkage between the phosphate and headgroup of certain phospholipids (sphingolipid and lysolipid substrates), forming an alcohol (often choline) and a cyclic phosphate. This toxin acts on sphingomyelin (SM). It may also act on ceramide phosphoethanolamine (CPE), lysophosphatidylcholine (LPC) and lysophosphatidylethanolamine (LPE), but not on lysophosphatidylserine (LPS), and lysophosphatidylglycerol (LPG). It acts by transphosphatidylation, releasing exclusively cyclic phosphate products as second products. Induces dermonecrosis, hemolysis, increased vascular permeability, edema, inflammatory response, and platelet aggregation. In Loxosceles spinulosa (Recluse spider), this protein is Dermonecrotic toxin LspiSicTox-betaIII2.